The sequence spans 95 residues: Large ribosomal subunit protein uL23 (95 aa).

The protein belongs to the universal ribosomal protein uL23 family. In terms of assembly, part of the 50S ribosomal subunit. Contacts protein L29, and trigger factor when it is bound to the ribosome.

Its function is as follows. One of the early assembly proteins it binds 23S rRNA. One of the proteins that surrounds the polypeptide exit tunnel on the outside of the ribosome. Forms the main docking site for trigger factor binding to the ribosome. The protein is Large ribosomal subunit protein uL23 of Deinococcus deserti (strain DSM 17065 / CIP 109153 / LMG 22923 / VCD115).